Consider the following 121-residue polypeptide: UPF0102 protein AAur_2443 (121 aa).

It belongs to the UPF0102 family.

The polypeptide is UPF0102 protein AAur_2443 (Paenarthrobacter aurescens (strain TC1)).